Reading from the N-terminus, the 290-residue chain is Enoyl-CoA hydratase, mitochondrial (290 aa).

The N-terminal 27 residues, 1–27 (MAALRALLPRACSSLLSSVRCPELRRF), are a transit peptide targeting the mitochondrion. 98-101 (ADIK) contributes to the substrate binding site. The residue at position 101 (lysine 101) is an N6-acetyllysine; alternate. The residue at position 101 (lysine 101) is an N6-succinyllysine; alternate. Position 114 is a phosphoserine (serine 114). Lysine 115 is modified (N6-acetyllysine; alternate). Residue lysine 115 is modified to N6-succinyllysine; alternate. Substrate is bound at residue glycine 141. An N6-succinyllysine modification is found at lysine 204. Lysine 211 carries the N6-acetyllysine modification. Lysine 217 carries the post-translational modification N6-acetyllysine; alternate. Lysine 217 carries the N6-succinyllysine; alternate modification.

It belongs to the enoyl-CoA hydratase/isomerase family. As to quaternary structure, homohexamer; dimer of trimers. Post-translationally, acetylation of Lys-101 is observed in liver mitochondria from fasted mice but not from fed mice.

It localises to the mitochondrion matrix. It catalyses the reaction a (3S)-3-hydroxyacyl-CoA = a (2E)-enoyl-CoA + H2O. It carries out the reaction a (3E)-enoyl-CoA = a 4-saturated (2E)-enoyl-CoA. The enzyme catalyses (3E)-hexenoyl-CoA = (2E)-hexenoyl-CoA. The catalysed reaction is (3S)-3-hydroxybutanoyl-CoA = (2E)-butenoyl-CoA + H2O. It catalyses the reaction 3-hydroxyisovaleryl-CoA = 3-methylbut-2-enoyl-CoA + H2O. It carries out the reaction 3-hydroxypropanoyl-CoA = acryloyl-CoA + H2O. The enzyme catalyses 3-hydroxybutanoyl-CoA = (2E)-butenoyl-CoA + H2O. The catalysed reaction is 2-methylpropenoyl-CoA + H2O = (S)-3-hydroxyisobutanoyl-CoA. It catalyses the reaction (3S)-hydroxyhexanoyl-CoA = (2E)-hexenoyl-CoA + H2O. It carries out the reaction (3S)-hydroxydecanoyl-CoA = (2E)-decenoyl-CoA + H2O. It participates in lipid metabolism; fatty acid beta-oxidation. Its function is as follows. Converts unsaturated trans-2-enoyl-CoA species ((2E)-enoyl-CoA) to the corresponding (3S)-3-hydroxyacyl-CoA species through addition of a water molecule to the double bond. Catalyzes the hydration of medium- and short-chained fatty enoyl-CoA thioesters from 4 carbons long (C4) up to C16. Has high substrate specificity for crotonyl-CoA ((2E)-butenoyl-CoA) and moderate specificity for acryloyl-CoA, 3-methylcrotonyl-CoA (3-methyl-(2E)-butenoyl-CoA) and methacrylyl-CoA ((2E)-2-methylpropenoyl-CoA). Can bind tiglyl-CoA (2-methylcrotonoyl-CoA), but hydrates only a small amount of this substrate. Plays a key role in the beta-oxidation spiral of short- and medium-chain fatty acid oxidation. At a lower rate than the hydratase reaction, catalyzes the isomerase reaction of trans-3-enoyl-CoA species (such as (3E)-hexenoyl-CoA) to trans-2-enoyl-CoA species (such as (2E)-hexenoyl-CoA), which are subsequently hydrated to 3(S)-3-hydroxyacyl-CoA species (such as (3S)-hydroxyhexanoyl-CoA). This chain is Enoyl-CoA hydratase, mitochondrial, found in Mus musculus (Mouse).